The primary structure comprises 250 residues: UPF0736 protein BLi01230/BL03322 (250 aa).

This sequence belongs to the UPF0736 family.

The polypeptide is UPF0736 protein BLi01230/BL03322 (Bacillus licheniformis (strain ATCC 14580 / DSM 13 / JCM 2505 / CCUG 7422 / NBRC 12200 / NCIMB 9375 / NCTC 10341 / NRRL NRS-1264 / Gibson 46)).